We begin with the raw amino-acid sequence, 425 residues long: MVMFSQDHVQIVYGSTRICKSLAPANKRKTHRTIVVAPRRGFLRIPPDGQDVNHVKIVPTTTSSSLAPPRDDERRPTPPLRPPLTVYPYGTSLIRRSARDAKLRSKLIVFHITRPALGQHPQNPGISGPAAMDHSEFLTSFRREVDRQTVLTAESAPATVEVCLGDALPGGVMGGGGLPAGVGSASAAVAAAAAAVAGVPVAANPVMPATATVTTPPMIDLTSHHRPLTLFTPASAAAAPAVATNGGNATYILPADCRYAPLFASKYKYVFEEVSRLMRLHDSTAVQLQISASCGNAFQALKSALLKLHNVTVLAGQQLITQTMPHTPQAVATFKFFHQDPNRVLDCIRPVVPRSTSYHETGVYQMWVSGATKKDLFDAVTLCASIVEKQPDVFNINVSLLTYPSIAAPHLPLYNEFTSFRLPTS.

Residues 59-83 (PTTTSSSLAPPRDDERRPTPPLRPP) form a disordered region.

Belongs to the herpesviridae U84 family.

Its subcellular location is the host nucleus. Functionally, plays a role in the inhibition of host DNA replication in the infected cell. Targets the mini-chromosome maintenance (MCM) complex and blocks the accumulation of MCM proteins and their loading onto host chromatin. The protein is Protein UL117 (UL117) of Homo sapiens (Human).